We begin with the raw amino-acid sequence, 426 residues long: Bile acid CoA-transferase BaiF (426 aa).

Asp168 (nucleophile) is an active-site residue.

This sequence belongs to the CoA-transferase III family.

The enzyme catalyses lithocholoyl-CoA + cholate = choloyl-CoA + lithocholate. It catalyses the reaction deoxycholoyl-CoA + cholate = choloyl-CoA + deoxycholate. The catalysed reaction is allodeoxycholoyl-CoA + cholate = allodeoxycholate + choloyl-CoA. It carries out the reaction allocholate + deoxycholoyl-CoA = allocholoyl-CoA + deoxycholate. The enzyme catalyses allocholate + lithocholoyl-CoA = allocholoyl-CoA + lithocholate. It catalyses the reaction allocholate + allodeoxycholoyl-CoA = allocholoyl-CoA + allodeoxycholate. The catalysed reaction is lithocholoyl-CoA + chenodeoxycholate = chenodeoxycholoyl-CoA + lithocholate. It carries out the reaction ursodeoxycholate + deoxycholoyl-CoA = ursodeoxycholoyl-CoA + deoxycholate. The enzyme catalyses ursodeoxycholate + lithocholoyl-CoA = ursodeoxycholoyl-CoA + lithocholate. It catalyses the reaction allodeoxycholoyl-CoA + ursodeoxycholate = ursodeoxycholoyl-CoA + allodeoxycholate. The catalysed reaction is beta-muricholate + lithocholoyl-CoA = beta-muricholoyl-CoA + lithocholate. It carries out the reaction beta-muricholate + deoxycholoyl-CoA = beta-muricholoyl-CoA + deoxycholate. The enzyme catalyses beta-muricholate + allodeoxycholoyl-CoA = beta-muricholoyl-CoA + allodeoxycholate. It catalyses the reaction choloyl-CoA + H2O = cholate + CoA + H(+). The catalysed reaction is chenodeoxycholoyl-CoA + H2O = chenodeoxycholate + CoA + H(+). It participates in lipid metabolism; bile acid biosynthesis. In terms of biological role, functions in the bile acid 7alpha-dehydroxylation pathway, which forms secondary bile acids via the 7alpha-dehydroxylation of primary bile acids, and is carried out by intestinal anaerobic bacteria. Acts as a bile acid CoA transferase with broad bile acid substrate specificity. Catalyzes the transfer of the CoA moiety of secondary bile acid-CoA compounds to primary bile acids. Can use lithocholoyl-CoA, deoxycholoyl-CoA and allodeoxycholoyl-CoA as bile acid CoA donors and cholate, allocholate, chenodeoxycholate, ursodeoxycholate, and beta-muricholate as bile acid CoA acceptors. Also displays CoA hydrolase activity, being able to catalyze the hydrolysis of choloyl-CoA, 3-dehydrocholoyl-CoA, and chenodeoxycholoyl-CoA, releasing CoA and the corresponding free bile acid. However, this latter activity may not represent the actual activity of this enzyme, since using a transferase rather than hydrolase, the bacteria conserve the thioester bond energy, saving ATP molecules. Shows no hydrolytic activity with acetyl-CoA, isovaleryl-CoA, palmitoyl-CoA, or phenylacetyl-CoA as substrates. This Clostridium scindens (strain JCM 10418 / VPI 12708) protein is Bile acid CoA-transferase BaiF.